The primary structure comprises 183 residues: 2-C-methyl-D-erythritol 2,4-cyclodiphosphate synthase (183 aa).

A divalent metal cation contacts are provided by Asp10 and His12. Residues 10 to 12 (DVH) and 38 to 39 (HS) contribute to the 4-CDP-2-C-methyl-D-erythritol 2-phosphate site. His46 is a binding site for a divalent metal cation. Residues 60-62 (DIG) and 65-69 (FPDTD) contribute to the 4-CDP-2-C-methyl-D-erythritol 2-phosphate site.

This sequence belongs to the IspF family. As to quaternary structure, homotrimer. A divalent metal cation is required as a cofactor.

The enzyme catalyses 4-CDP-2-C-methyl-D-erythritol 2-phosphate = 2-C-methyl-D-erythritol 2,4-cyclic diphosphate + CMP. It participates in isoprenoid biosynthesis; isopentenyl diphosphate biosynthesis via DXP pathway; isopentenyl diphosphate from 1-deoxy-D-xylulose 5-phosphate: step 4/6. Functionally, involved in the biosynthesis of isopentenyl diphosphate (IPP) and dimethylallyl diphosphate (DMAPP), two major building blocks of isoprenoid compounds. Catalyzes the conversion of 4-diphosphocytidyl-2-C-methyl-D-erythritol 2-phosphate (CDP-ME2P) to 2-C-methyl-D-erythritol 2,4-cyclodiphosphate (ME-CPP) with a corresponding release of cytidine 5-monophosphate (CMP). This chain is 2-C-methyl-D-erythritol 2,4-cyclodiphosphate synthase, found in Verminephrobacter eiseniae (strain EF01-2).